We begin with the raw amino-acid sequence, 372 residues long: Pre-small/secreted glycoprotein (372 aa).

A signal peptide spans 1–32; that stretch reads MEGLSLLQLPRDKFRKSSFFVWVIILFQKAFS. N-linked (GlcNAc...) asparagine; by host glycosylation is present at asparagine 40. Cystine bridges form between cysteine 108-cysteine 135 and cysteine 121-cysteine 147. N-linked (GlcNAc...) asparagine; by host glycans are attached at residues asparagine 204, asparagine 208, asparagine 238, asparagine 257, and asparagine 268. The disordered stretch occupies residues 320 to 340; the sequence is MRHRRELQREESPTGPPGSIR.

Belongs to the filoviruses glycoprotein family. As to quaternary structure, homodimer; disulfide-linked. The homodimers are linked by two disulfide bonds in a parallel orientation. Monomer. In terms of processing, this precursor is processed into mature sGP and delta-peptide by host furin or furin-like proteases. The cleavage site corresponds to the furin optimal cleavage sequence [KR]-X-[KR]-R. N-glycosylated. Post-translationally, O-glycosylated.

It localises to the secreted. Its function is as follows. Seems to possess an anti-inflammatory activity as it can reverse the barrier-decreasing effects of TNF alpha. Might therefore contribute to the lack of inflammatory reaction seen during infection in spite the of extensive necrosis and massive virus production. Does not seem to be involved in activation of primary macrophages. Does not seem to interact specifically with neutrophils. In terms of biological role, viroporin that permeabilizes mammalian cell plasma membranes. It acts by altering permeation of ionic compounds and small molecules. This activity may lead to viral enterotoxic activity. This Sudan ebolavirus (strain Boniface-76) (SEBOV) protein is Pre-small/secreted glycoprotein (GP).